Reading from the N-terminus, the 572-residue chain is Proline--tRNA ligase (572 aa).

The protein belongs to the class-II aminoacyl-tRNA synthetase family. ProS type 1 subfamily. In terms of assembly, homodimer.

The protein localises to the cytoplasm. It carries out the reaction tRNA(Pro) + L-proline + ATP = L-prolyl-tRNA(Pro) + AMP + diphosphate. Functionally, catalyzes the attachment of proline to tRNA(Pro) in a two-step reaction: proline is first activated by ATP to form Pro-AMP and then transferred to the acceptor end of tRNA(Pro). As ProRS can inadvertently accommodate and process non-cognate amino acids such as alanine and cysteine, to avoid such errors it has two additional distinct editing activities against alanine. One activity is designated as 'pretransfer' editing and involves the tRNA(Pro)-independent hydrolysis of activated Ala-AMP. The other activity is designated 'posttransfer' editing and involves deacylation of mischarged Ala-tRNA(Pro). The misacylated Cys-tRNA(Pro) is not edited by ProRS. The chain is Proline--tRNA ligase from Leuconostoc mesenteroides subsp. mesenteroides (strain ATCC 8293 / DSM 20343 / BCRC 11652 / CCM 1803 / JCM 6124 / NCDO 523 / NBRC 100496 / NCIMB 8023 / NCTC 12954 / NRRL B-1118 / 37Y).